The sequence spans 354 residues: Ubiquitin-conjugating enzyme E2 Z (354 aa).

The disordered stretch occupies residues 1-21; that stretch reads MAESPTEEAATAGAGAAGPGA. The UBC core domain maps to 99–253; the sequence is QCLLRIKRDI…IRHETIRVAV (155 aa). Cys188 acts as the Glycyl thioester intermediate in catalysis. Residues 332–354 are disordered; it reads NAEMDSDSSSSGTETDLHGSLRV. A Phosphoserine modification is found at Ser337.

This sequence belongs to the ubiquitin-conjugating enzyme family. In terms of tissue distribution, widely expressed. Highly in placenta, pancreas, spleen and testis.

The protein resides in the cytoplasm. The protein localises to the nucleus. The enzyme catalyses S-ubiquitinyl-[E1 ubiquitin-activating enzyme]-L-cysteine + [E2 ubiquitin-conjugating enzyme]-L-cysteine = [E1 ubiquitin-activating enzyme]-L-cysteine + S-ubiquitinyl-[E2 ubiquitin-conjugating enzyme]-L-cysteine.. Its pathway is protein modification; protein ubiquitination. In terms of biological role, catalyzes the covalent attachment of ubiquitin to other proteins. Specific substrate for UBA6, not charged with ubiquitin by UBE1. May be involved in apoptosis regulation. This is Ubiquitin-conjugating enzyme E2 Z (UBE2Z) from Homo sapiens (Human).